The following is a 105-amino-acid chain: Nitrogen fixation nifHD region GlnB-like protein 1 (105 aa).

It belongs to the P(II) protein family.

In terms of biological role, could be involved in the regulation of nitrogen fixation. The polypeptide is Nitrogen fixation nifHD region GlnB-like protein 1 (glnBA) (Methanobacterium ivanovii).